We begin with the raw amino-acid sequence, 97 residues long: Large ribosomal subunit protein eL21 (97 aa).

This sequence belongs to the eukaryotic ribosomal protein eL21 family.

The protein is Large ribosomal subunit protein eL21 of Methanococcoides burtonii (strain DSM 6242 / NBRC 107633 / OCM 468 / ACE-M).